A 100-amino-acid polypeptide reads, in one-letter code: A-type ATP synthase subunit F (100 aa).

It belongs to the V-ATPase F subunit family. As to quaternary structure, has multiple subunits with at least A(3), B(3), C, D, E, F, H, I and proteolipid K(x).

The protein resides in the cell membrane. Functionally, component of the A-type ATP synthase that produces ATP from ADP in the presence of a proton gradient across the membrane. In Methanospirillum hungatei JF-1 (strain ATCC 27890 / DSM 864 / NBRC 100397 / JF-1), this protein is A-type ATP synthase subunit F.